The primary structure comprises 363 residues: Protein RecA (363 aa).

ATP is bound at residue 79–86 (GPESSGKT).

Belongs to the RecA family.

The protein localises to the cytoplasm. In terms of biological role, can catalyze the hydrolysis of ATP in the presence of single-stranded DNA, the ATP-dependent uptake of single-stranded DNA by duplex DNA, and the ATP-dependent hybridization of homologous single-stranded DNAs. It interacts with LexA causing its activation and leading to its autocatalytic cleavage. This is Protein RecA from Methylobacterium radiotolerans (strain ATCC 27329 / DSM 1819 / JCM 2831 / NBRC 15690 / NCIMB 10815 / 0-1).